Here is a 174-residue protein sequence, read N- to C-terminus: MNRTEKEQVIGELHEKMAMAKAAILAEPKGLNVATVTELRRKLREAKVEYRIVKNTLAARAAKGTPVESIAEKFVGPTALVMSYDDVVTPAKLLADFMKDRENFTIRTAVIEGRVVDAKGIQSLAKMPGLQELRGQIAAMIAQPATQLARVLGAPGQQLARVLGARREQLEKQS.

It belongs to the universal ribosomal protein uL10 family. Part of the ribosomal stalk of the 50S ribosomal subunit. The N-terminus interacts with L11 and the large rRNA to form the base of the stalk. The C-terminus forms an elongated spine to which L12 dimers bind in a sequential fashion forming a multimeric L10(L12)X complex.

In terms of biological role, forms part of the ribosomal stalk, playing a central role in the interaction of the ribosome with GTP-bound translation factors. In Anaeromyxobacter sp. (strain Fw109-5), this protein is Large ribosomal subunit protein uL10.